Consider the following 255-residue polypeptide: Putative deoxyribonuclease tatdn3-B (255 aa).

Zn(2+) is bound by residues H11, H13, E106, H129, H152, and D199.

Belongs to the metallo-dependent hydrolases superfamily. TatD-type hydrolase family. Mn(2+) is required as a cofactor. Requires Ca(2+) as cofactor. The cofactor is Mg(2+). It depends on Zn(2+) as a cofactor.

The protein resides in the nucleus. Its activity is regulated as follows. The 3'-exonuclease activity is sensitive to the metal ion present in the active site, whereas the AP endodeoxyribonuclease activity is observed in a variety of divalent metal cofactors. 3'-exoxonuclease activity is suppressed in the presence of Ca(2+), Zn(2+) and Ni(2+). In terms of biological role, exhibits 3'-exonuclease activities and apurinic/apyrimidinic (AP) endonuclease (in vitro). Show preferential AP endonuclease activity on double-stranded DNA substrates and 3'- exonuclease activity on single-stranded DNA. The sequence is that of Putative deoxyribonuclease tatdn3-B (tatdn3-b) from Xenopus laevis (African clawed frog).